The chain runs to 294 residues: Large ribosomal subunit protein uL4m (294 aa).

The tract at residues 120-139 (VRGGGRKPWQQKGSGRARHG) is disordered. Arg147 is subject to Omega-N-methylarginine.

This sequence belongs to the universal ribosomal protein uL4 family. Component of the mitochondrial ribosome large subunit (39S) which comprises a 16S rRNA and about 50 distinct proteins. Interacts with MIEF1 upstream open reading frame protein.

The protein localises to the mitochondrion. The chain is Large ribosomal subunit protein uL4m (MRPL4) from Bos taurus (Bovine).